Consider the following 177-residue polypeptide: Large ribosomal subunit protein uL6 (177 aa).

It belongs to the universal ribosomal protein uL6 family. Part of the 50S ribosomal subunit.

Functionally, this protein binds to the 23S rRNA, and is important in its secondary structure. It is located near the subunit interface in the base of the L7/L12 stalk, and near the tRNA binding site of the peptidyltransferase center. The protein is Large ribosomal subunit protein uL6 of Rhizobium rhizogenes (strain K84 / ATCC BAA-868) (Agrobacterium radiobacter).